We begin with the raw amino-acid sequence, 714 residues long: Choline transporter-like protein 5 (714 aa).

Over 1-33 (MGRRSAAPTSPFGEPRKFDPKFKGPIGKRHCTD) the chain is Cytoplasmic. A helical transmembrane segment spans residues 34–54 (VLCCIIFVVVILGYIALGVVA). Topologically, residues 55-237 (WIHGDPRKII…KIFEDYASSW (183 aa)) are extracellular. N83, N132, N192, and N205 each carry an N-linked (GlcNAc...) asparagine glycan. The chain crosses the membrane as a helical span at residues 238–258 (YWILIALFIAMVVSLLFLILL). The Cytoplasmic portion of the chain corresponds to 259 to 261 (RFT). The chain crosses the membrane as a helical span at residues 262–282 (AGVFFWIFIIGVIGVVGYGIW). Residues 283–320 (HCFWEYDSLKGVPGADLTIYDIGLQTDFRVYLQLRQTW) lie on the Extracellular side of the membrane. A helical membrane pass occupies residues 321–341 (LAFMILLCIVEVIIILMLIFL). The Cytoplasmic portion of the chain corresponds to 342–346 (RNRIR). Residues 347-367 (IAIALLQEGSRAIGYIMSTLF) traverse the membrane as a helical segment. The Extracellular portion of the chain corresponds to 368-369 (YP). Residues 370–390 (IITFILIAICISYWAVTAVFM) traverse the membrane as a helical segment. Residues 391 to 455 (ATSGEPIYKV…QYILIFQLCN (65 aa)) are Cytoplasmic-facing. Residues 456-476 (VFVFLWLVNFSIALGQCTLAG) traverse the membrane as a helical segment. Residues 477 to 510 (AFASYYWAFKKPADIPACPLFSSFGRAIRYHTGS) lie on the Extracellular side of the membrane. Residues 511–531 (LALGSLILALVQFIRIILEYL) form a helical membrane-spanning segment. Residues 532 to 605 (DHKLKASQNS…RVAVLDKVTD (74 aa)) are Cytoplasmic-facing. Residues 606-626 (FLLFLGKVFVTGSVGVLAFFF) traverse the membrane as a helical segment. Over 627–644 (FTRKIPVLTDEAPALNYY) the chain is Extracellular. The helical transmembrane segment at 645–665 (WVPLLTVLIGSYLIAHGFFSV) threads the bilayer. The Cytoplasmic segment spans residues 666–711 (YAMCVDTLFLCFCEDLERNNGSSSKPYYMSPNLHRILGKKEILSKK).

This sequence belongs to the CTL (choline transporter-like) family.

It is found in the cell membrane. The enzyme catalyses choline(out) + n H(+)(in) = choline(in) + n H(+)(out). Its function is as follows. Choline/H+ antiporter. In Xenopus tropicalis (Western clawed frog), this protein is Choline transporter-like protein 5 (slc44a5).